Consider the following 554-residue polypeptide: Calcium/calmodulin-dependent protein kinase type II delta 2 chain (554 aa).

Residues 13–271 (YQLFEELGKG…AAEAPKHPWI (259 aa)) form the Protein kinase domain. ATP contacts are provided by residues 19–27 (LGKGAFSVV) and lysine 42. Aspartate 135 functions as the Proton acceptor in the catalytic mechanism. At threonine 286 the chain carries Phosphothreonine. Phosphoserine occurs at positions 314 and 318. Disordered regions lie at residues 324–375 (PDGV…TIED) and 392–413 (WQPS…SSVQ). The span at 330–340 (NNKTNLASSPK) shows a compositional bias: polar residues. Threonine 372 bears the Phosphothreonine mark.

This sequence belongs to the protein kinase superfamily. CAMK Ser/Thr protein kinase family. CaMK subfamily. As to quaternary structure, CAMK2 is composed of four different chains: alpha, beta, gamma, and delta. The different isoforms assemble into homo- or heteromultimeric holoenzymes composed of 8 to 12 subunits. As to expression, first detected at 18 hpf. At 24 hpf, expressed in discrete anterior locations and along either side of the midline. At 48 hpf, expression is predominantly in the forebrain, and then accumulates in the forebrain, hindbrain, and retinal epithelium at 72 hpf.

The catalysed reaction is L-seryl-[protein] + ATP = O-phospho-L-seryl-[protein] + ADP + H(+). It catalyses the reaction L-threonyl-[protein] + ATP = O-phospho-L-threonyl-[protein] + ADP + H(+). Its activity is regulated as follows. Autophosphorylation of CAMK2 plays an important role in the regulation of the kinase activity. Functionally, caM-kinase II (CAMK2) is a prominent kinase in the central nervous system. The chain is Calcium/calmodulin-dependent protein kinase type II delta 2 chain (camk2d2) from Danio rerio (Zebrafish).